The sequence spans 753 residues: Synaptotagmin-like protein 5 (753 aa).

Residues 7–123 (FINLSFLLDH…IISGEWFLEE (117 aa)) enclose the RabBD domain. The FYVE-type zinc finger occupies 64–106 (CVHCHKTLGLIFDRGDPCQACSLRVCSECRVTGLDGSWKCTVC). Disordered regions lie at residues 145–279 (RRSP…SREH), 297–359 (LTKS…LNSL), and 380–404 (LASG…VPDA). The residue at position 147 (S147) is a Phosphoserine. The segment covering 150–174 (SEETQNQEQAQQCVDKSDTLSSVRQ) has biased composition (polar residues). The span at 195–206 (TRGEIRTPKPES) shows a compositional bias: basic and acidic residues. A compositionally biased stretch (polar residues) spans 214–223 (LDSQNLQSFK). Residues 224–237 (SASGSDRGSTTSSD) show a composition bias toward low complexity. Positions 249-275 (KSSYSNGGIPVTQRSPVPSAHSVTSIN) are enriched in polar residues. The span at 380-391 (LASGLSTNSQAG) shows a compositional bias: polar residues. C2 domains are found at residues 429–550 (VTGE…DEWF) and 597–717 (KRGK…VDWM).

In terms of assembly, binds RAB27A that has been activated by GTP-binding.

The protein resides in the membrane. Its function is as follows. May act as Rab effector protein and play a role in vesicle trafficking. Binds phospholipids. The protein is Synaptotagmin-like protein 5 (Sytl5) of Mus musculus (Mouse).